The following is a 553-amino-acid chain: Non-SCF-type F-box protein ROY1 (553 aa).

Positions 3–49 constitute an F-box domain; the sequence is FQDQDIFIVFSHASLFLNQNDLLSLSLTSKKMHDMIAIPRLYSNIHI.

Interacts with SKP1 and YPT32; SKP1 is required for the interaction with YPT32.

It localises to the cytoplasm. It is found in the nucleus. The protein localises to the cytoplasmic vesicle membrane. In terms of biological role, non-SCF-type F-box protein involved in the endocytic with the vacuolar sorting pathway. Acts as a repressor of YPT52 by inhibiting the formation of active, GTP-bound, YPT52. Involved in the defense mechanism against methylmercury toxicity. This Saccharomyces cerevisiae (strain ATCC 204508 / S288c) (Baker's yeast) protein is Non-SCF-type F-box protein ROY1 (ROY1).